The chain runs to 347 residues: Holliday junction branch migration complex subunit RuvB (347 aa).

The segment at 4-184 (QDRIVDGHAS…FGIVQRLEFY (181 aa)) is large ATPase domain (RuvB-L). ATP-binding positions include arginine 24, glycine 65, lysine 68, threonine 69, threonine 70, 131-133 (EDF), arginine 174, tyrosine 184, and arginine 221. A Mg(2+)-binding site is contributed by threonine 69. The tract at residues 185–255 (SVQDLTHIVK…IADSALNMLN (71 aa)) is small ATPAse domain (RuvB-S). A head domain (RuvB-H) region spans residues 258 to 347 (HHGFDHMDRR…SQQQDSLPGI (90 aa)). DNA contacts are provided by arginine 294, arginine 313, and arginine 318.

The protein belongs to the RuvB family. As to quaternary structure, homohexamer. Forms an RuvA(8)-RuvB(12)-Holliday junction (HJ) complex. HJ DNA is sandwiched between 2 RuvA tetramers; dsDNA enters through RuvA and exits via RuvB. An RuvB hexamer assembles on each DNA strand where it exits the tetramer. Each RuvB hexamer is contacted by two RuvA subunits (via domain III) on 2 adjacent RuvB subunits; this complex drives branch migration. In the full resolvosome a probable DNA-RuvA(4)-RuvB(12)-RuvC(2) complex forms which resolves the HJ.

It localises to the cytoplasm. The catalysed reaction is ATP + H2O = ADP + phosphate + H(+). The RuvA-RuvB-RuvC complex processes Holliday junction (HJ) DNA during genetic recombination and DNA repair, while the RuvA-RuvB complex plays an important role in the rescue of blocked DNA replication forks via replication fork reversal (RFR). RuvA specifically binds to HJ cruciform DNA, conferring on it an open structure. The RuvB hexamer acts as an ATP-dependent pump, pulling dsDNA into and through the RuvAB complex. RuvB forms 2 homohexamers on either side of HJ DNA bound by 1 or 2 RuvA tetramers; 4 subunits per hexamer contact DNA at a time. Coordinated motions by a converter formed by DNA-disengaged RuvB subunits stimulates ATP hydrolysis and nucleotide exchange. Immobilization of the converter enables RuvB to convert the ATP-contained energy into a lever motion, pulling 2 nucleotides of DNA out of the RuvA tetramer per ATP hydrolyzed, thus driving DNA branch migration. The RuvB motors rotate together with the DNA substrate, which together with the progressing nucleotide cycle form the mechanistic basis for DNA recombination by continuous HJ branch migration. Branch migration allows RuvC to scan DNA until it finds its consensus sequence, where it cleaves and resolves cruciform DNA. The protein is Holliday junction branch migration complex subunit RuvB of Teredinibacter turnerae (strain ATCC 39867 / T7901).